The chain runs to 674 residues: Pre-mRNA-splicing factor cwf4 (674 aa).

HAT repeat units follow at residues 50–82 (EFQGRKRKEFEDAIRRNRLAMGHWMRYGQWELD), 84–116 (KEFARARSVFERALDVDSTYIPLWLKYIECEMK), 118–150 (RNINHARNLFDRAVTQLPRVDKLWYKYVYMEEM), 152–183 (GNITGCRQVFERWLKWEPDENCWMSYIRMERR), 185–216 (HENERARGIYERFVVVHPEVTNWLRWARFEEE), 218–253 (GNAANVRQVYLAAIDALGQEFLNERFFIAFAKFEIR), 255–289 (KEYERARTIFKYAIDFMPRSKSMELYKEYTHFEKQ), 299–331 (TVLDKRRLQYEKLLKDSPYDYDTWLDLLKLEES), 333–367 (GDINTIRETYEKAIAKVPEVVEKNAWRRYVYIWLN), 377–413 (KDVDRARKVYQEALKLIPHKKFTFAKLWLMYAMFELR), 415–446 (RKIDVARKTLGRALGMCPKPKLFRGYIEFEDA), 448–480 (KQFDRCRILYEKWILYDPEACAPWLGYAALETK), 482–516 (GDSDRARALYNLAVNQPILETPELVWKAYIDFEFE), 518–549 (MEYGKARSIYQQLLRTAPHVKVWISFANFEIA), 567–608 (TAVV…MHGT), and 610–643 (DTRKHVSSLMPQVVKKRRRLEDGSFEEYLDYLFP).

The protein belongs to the crooked-neck family. Belongs to the 40S cdc5-associated complex (or cwf complex), a spliceosome sub-complex reminiscent of a late-stage spliceosome composed of the U2, U5 and U6 snRNAs and at least brr2, cdc5, cwf2/prp3, cwf3/syf1, cwf4/syf3, cwf5/ecm2, spp42/cwf6, cwf7/spf27, cwf8, cwf9, cwf10, cwf11, cwf12, prp45/cwf13, cwf14, cwf15, cwf16, cwf17, cwf18, cwf19, cwf20, cwf21, cwf22, cwf23, cwf24, cwf25, cwf26, cyp7/cwf27, cwf28, cwf29/ist3, lea1, msl1, prp5/cwf1, prp10, prp12/sap130, prp17, prp22, sap61, sap62, sap114, sap145, slu7, smb1, smd1, smd3, smf1, smg1 and syf2.

The protein resides in the nucleus. Its function is as follows. Involved in pre-mRNA splicing and cell cycle progression. Required for the spliceosome assembly and initiation of the DNA replication. This Schizosaccharomyces pombe (strain 972 / ATCC 24843) (Fission yeast) protein is Pre-mRNA-splicing factor cwf4 (cwf4).